A 247-amino-acid chain; its full sequence is Phosphoglycerate mutase 1 (247 aa).

Residues 8–15 and 21–22 contribute to the substrate site; these read RHGQSEWN and TG. The active-site Tele-phosphohistidine intermediate is His-9. At Ser-12 the chain carries Phosphoserine. A Glycyl lysine isopeptide (Lys-Gly) (interchain with G-Cter in ubiquitin) cross-link involves residue Lys-31. Tyr-49 is subject to Phosphotyrosine. A Glycyl lysine isopeptide (Lys-Gly) (interchain with G-Cter in ubiquitin) cross-link involves residue Lys-57. Substrate is bound at residue Arg-60. Residue Lys-71 forms a Glycyl lysine isopeptide (Lys-Gly) (interchain with G-Cter in ubiquitin) linkage. The active-site Proton donor/acceptor is the Glu-87. Residues 87-90, Lys-98, and 114-115 contribute to the substrate site; these read ERHY and RR. Phosphoserine is present on residues Ser-116, Ser-127, and Ser-128. Glycyl lysine isopeptide (Lys-Gly) (interchain with G-Cter in ubiquitin) cross-links involve residues Lys-139 and Lys-175. Position 183 to 184 (183 to 184) interacts with substrate; sequence GN. Ser-185 carries the post-translational modification Phosphoserine. A Glycyl lysine isopeptide (Lys-Gly) (interchain with G-Cter in ubiquitin) cross-link involves residue Lys-191. Phosphoserine is present on Ser-197.

The protein belongs to the phosphoglycerate mutase family. BPG-dependent PGAM subfamily. Homotetramer: dimer of dimers.

The protein localises to the cytoplasm. It is found in the mitochondrion outer membrane. Its subcellular location is the mitochondrion intermembrane space. The enzyme catalyses (2R)-2-phosphoglycerate = (2R)-3-phosphoglycerate. It participates in carbohydrate degradation; glycolysis; pyruvate from D-glyceraldehyde 3-phosphate: step 3/5. With respect to regulation, inhibited by inositol hexakisphosphate and benzene tri-, tetra- and hexacarboxylates. Its function is as follows. Interconversion of 3- and 2-phosphoglycerate with 2,3-bisphosphoglycerate as the primer of the reaction. Can also catalyze the reaction of EC 5.4.2.4 (synthase), but with a reduced activity. The polypeptide is Phosphoglycerate mutase 1 (GPM1) (Saccharomyces cerevisiae (strain ATCC 204508 / S288c) (Baker's yeast)).